Consider the following 471-residue polypeptide: Secretogranin-3 (471 aa).

Residues 1-22 form the signal peptide; the sequence is MGFLWTGSWILVLVLNSGPIQA. Disordered stretches follow at residues 24–73, 92–145, 208–231, and 345–405; these read PKPE…SNFS, KAKQ…HQLD, ANNY…KIPE, and KLEK…DEAK. Positions 28-45 are enriched in basic and acidic residues; that stretch reads GSQDKSLHNRELSAERPL. Serine 40 is modified (phosphoserine). Serine 40 carries O-linked (Xyl...) (chondroitin sulfate) serine glycosylation. Low complexity predominate over residues 62-73; sequence PSESKPSESNFS. Basic and acidic residues-rich tracts occupy residues 106-142, 214-231, 345-355, and 363-405; these read LNVD…DGLH, APEK…KIPE, KLEKNTTDSKS, and EKSH…DEAK. At serine 365 the chain carries Phosphoserine.

As to quaternary structure, interacts with CHGA. Interacts with secretogranin II/SCG2. Interacts (via C-terminus) with CPE. Expression restricted to the brain and pituitary gland. Not detected in the adrenal gland.

It is found in the cytoplasmic vesicle. It localises to the secretory vesicle. The protein resides in the secretory vesicle membrane. Its subcellular location is the secreted. Member of the granin protein family that regulates the biogenesis of secretory granules. Acts as a sorting receptor for intragranular proteins including chromogranin A/CHGA. May also play a role in angiogenesis. Promotes endothelial proliferation, migration and tube formation through MEK/ERK signaling pathway. The protein is Secretogranin-3 (Scg3) of Rattus norvegicus (Rat).